Reading from the N-terminus, the 259-residue chain is Large ribosomal subunit protein uL2m (259 aa).

The segment at 234 to 259 (VAMNPVDHPNGGRTKTPKPERSPGVE) is disordered. Over residues 250 to 259 (PKPERSPGVE) the composition is skewed to basic and acidic residues.

The protein belongs to the universal ribosomal protein uL2 family.

Its subcellular location is the mitochondrion. The chain is Large ribosomal subunit protein uL2m (RPL2) from Paramecium tetraurelia.